The following is a 361-amino-acid chain: 3,6-anhydro-alpha-L-galactonate cycloisomerase (361 aa).

The active-site Proton acceptor is Lys166. Mg(2+) is bound by residues Asp195, Glu221, and Glu247. His297 functions as the Proton donor/acceptor in the catalytic mechanism.

It belongs to the mandelate racemase/muconate lactonizing enzyme family. Requires Mg(2+) as cofactor.

The catalysed reaction is 3,6-anhydro-L-galactonate = 2-dehydro-3-deoxy-L-galactonate. In terms of biological role, involved in the degradation of 3,6-anhydro-L-galactose, which is the major monomeric sugar of red macroalgae. Catalyzes the isomerization of 3,6-anhydrogalactonate (AHGA) to 2-keto-3-deoxy-galactonate (KDGal). The sequence is that of 3,6-anhydro-alpha-L-galactonate cycloisomerase from Streptomyces coelicolor (strain ATCC BAA-471 / A3(2) / M145).